Consider the following 439-residue polypeptide: MIKKLGLNFKNTKKVTNELKQRIASVVIALIIFRIGSFIPIPGIDTTILSRILNDQKGTIIEMFNMFSGGALSRASIFALGIMPYISSSIIIQLLTLVIPSLSEIKKEGEVGRTKINQYTRYTTLVLALFQSIGIVTSLPKISGMNQIIIHPDFYFYFTAIIILVTGTMFLMWLGELITECGIGNGISIIIFIGIIAGLPSAIVHTIEQTRQGDLHILLFLCVLILIFSVVFLVVFIERSQRKIIIHYAQRQKGRRIYSTQSTHLPLKINMAGVIPAIFASSVVLFPVTIISWFGIDRKCYLLKTIFFYFQPNQPLYLILYVFSIIFFCFFYTGLVFNPRETADNLKKSGGFISGIRPGEQTAKYINKIMIRLTLFGSLYIAFICLIPEFMRSAMNVPFYFGGTSLLIVVVVIMDFIAQIQTLIMSSQYESVLKKANLN.

10 consecutive transmembrane segments (helical) span residues 23–43 (IASV…PIPG), 77–97 (IFAL…LLTL), 125–145 (LVLA…ISGM), 154–174 (FYFY…LMWL), 187–207 (ISII…VHTI), 217–237 (ILLF…VVFI), 274–294 (VIPA…ISWF), 317–337 (YLIL…GLVF), 369–389 (IMIR…LIPE), and 397–417 (VPFY…MDFI).

It belongs to the SecY/SEC61-alpha family. As to quaternary structure, component of the Sec protein translocase complex. Heterotrimer consisting of SecY, SecE and SecG subunits. The heterotrimers can form oligomers, although 1 heterotrimer is thought to be able to translocate proteins. Interacts with the ribosome. Interacts with SecDF, and other proteins may be involved. Interacts with SecA.

It localises to the cell membrane. Functionally, the central subunit of the protein translocation channel SecYEG. Consists of two halves formed by TMs 1-5 and 6-10. These two domains form a lateral gate at the front which open onto the bilayer between TMs 2 and 7, and are clamped together by SecE at the back. The channel is closed by both a pore ring composed of hydrophobic SecY resides and a short helix (helix 2A) on the extracellular side of the membrane which forms a plug. The plug probably moves laterally to allow the channel to open. The ring and the pore may move independently. The polypeptide is Protein translocase subunit SecY (Buchnera aphidicola subsp. Schizaphis graminum (strain Sg)).